Reading from the N-terminus, the 57-residue chain is U-Asilidin(1)-Mar2a (57 aa).

Residues Met1–Ala24 form the signal peptide. 3 cysteine pairs are disulfide-bonded: Cys28–Cys44, Cys35–Cys48, and Cys43–Cys53.

Belongs to the asilidin-1 family. As to expression, expressed by the venom gland. Exclusively expressed in the venom thoracic glands (and not in body tissues).

The protein localises to the secreted. In terms of biological role, may act as a neurotoxin. The protein is U-Asilidin(1)-Mar2a of Machimus arthriticus (Breck robberfly).